Consider the following 389-residue polypeptide: Chalcone synthase (389 aa).

Residues Cys164, His303, and Asn336 contribute to the active site.

This sequence belongs to the thiolase-like superfamily. Chalcone/stilbene synthases family. Homodimer. In terms of tissue distribution, mainly expressed in flowers, to a lower extent in young leaves, and barely in mature leaves and twigs.

It catalyses the reaction (E)-4-coumaroyl-CoA + 3 malonyl-CoA + 3 H(+) = 2',4,4',6'-tetrahydroxychalcone + 3 CO2 + 4 CoA. It functions in the pathway secondary metabolite biosynthesis; flavonoid biosynthesis. The primary product of this enzyme is 4,2',4',6'-tetrahydroxychalcone (also termed naringenin-chalcone or chalcone) which can under specific conditions spontaneously isomerize into naringenin. This is Chalcone synthase from Rhododendron dauricum (Azalea daurica).